The sequence spans 445 residues: Phosphoglucosamine mutase (445 aa).

Ser102 serves as the catalytic Phosphoserine intermediate. Mg(2+)-binding residues include Ser102, Asp241, Asp243, and Asp245. A Phosphoserine modification is found at Ser102.

Belongs to the phosphohexose mutase family. Requires Mg(2+) as cofactor. In terms of processing, activated by phosphorylation.

It catalyses the reaction alpha-D-glucosamine 1-phosphate = D-glucosamine 6-phosphate. Its function is as follows. Catalyzes the conversion of glucosamine-6-phosphate to glucosamine-1-phosphate. The chain is Phosphoglucosamine mutase from Acinetobacter baumannii (strain ACICU).